We begin with the raw amino-acid sequence, 360 residues long: 3-isopropylmalate dehydrogenase (360 aa).

76-89 (GPKWDTIERDIRPE) lines the NAD(+) pocket. Residues R96, R106, R134, and D224 each contribute to the substrate site. The Mg(2+) site is built by D224, D248, and D252. Position 282 to 294 (282 to 294 (GSAPDIAGKGIAN)) interacts with NAD(+).

Belongs to the isocitrate and isopropylmalate dehydrogenases family. LeuB type 1 subfamily. In terms of assembly, homodimer. Mg(2+) serves as cofactor. The cofactor is Mn(2+).

The protein resides in the cytoplasm. The enzyme catalyses (2R,3S)-3-isopropylmalate + NAD(+) = 4-methyl-2-oxopentanoate + CO2 + NADH. Its pathway is amino-acid biosynthesis; L-leucine biosynthesis; L-leucine from 3-methyl-2-oxobutanoate: step 3/4. In terms of biological role, catalyzes the oxidation of 3-carboxy-2-hydroxy-4-methylpentanoate (3-isopropylmalate) to 3-carboxy-4-methyl-2-oxopentanoate. The product decarboxylates to 4-methyl-2 oxopentanoate. The sequence is that of 3-isopropylmalate dehydrogenase from Pseudomonas syringae pv. syringae (strain B728a).